A 266-amino-acid chain; its full sequence is Undecaprenyl-diphosphatase (266 aa).

7 helical membrane passes run 41–61, 80–100, 107–127, 140–160, 180–200, 213–233, and 245–265; these read NLAF…VVLW, TKYV…GVFF, IFGS…ALLA, ISMK…MPGL, LAQF…LLDV, IPAL…CVAC, and LIYF…CTLL.

It belongs to the UppP family.

Its subcellular location is the cell inner membrane. The catalysed reaction is di-trans,octa-cis-undecaprenyl diphosphate + H2O = di-trans,octa-cis-undecaprenyl phosphate + phosphate + H(+). Catalyzes the dephosphorylation of undecaprenyl diphosphate (UPP). Confers resistance to bacitracin. This Parabacteroides distasonis (strain ATCC 8503 / DSM 20701 / CIP 104284 / JCM 5825 / NCTC 11152) protein is Undecaprenyl-diphosphatase.